A 465-amino-acid polypeptide reads, in one-letter code: Sodium-dependent phosphate transport protein 1 (465 aa).

N-linked (GlcNAc...) asparagine glycans are attached at residues N39, N47, and N56. 10 helical membrane-spanning segments follow: residues 79 to 99, 117 to 137, 176 to 196, 199 to 219, 260 to 280, 304 to 324, 337 to 356, 363 to 383, 399 to 419, and 429 to 449; these read GLIL…VGYL, SLMS…VIVC, FVMG…LLGW, VFYI…FLFF, LPLW…SLLV, LPYL…DFFL, LFTT…LLYL, TVIF…GQLI, VTAL…GLIL, and KIFF…FLFA.

This sequence belongs to the major facilitator superfamily. Sodium/anion cotransporter family. Interacts with PDZK1. Kidney.

The protein resides in the apical cell membrane. The catalysed reaction is 3 Na(+)(out) + phosphate(out) = 3 Na(+)(in) + phosphate(in). It catalyses the reaction urate(out) = urate(in). Its function is as follows. Important for the resorption of phosphate by the kidney. May be involved in actively transporting phosphate into cells via Na(+) cotransport in the renal brush border membrane. Plays a role in urate transport in the kidney. This is Sodium-dependent phosphate transport protein 1 (Slc17a1) from Mus musculus (Mouse).